The primary structure comprises 412 residues: ATP phosphoribosyltransferase regulatory subunit (412 aa).

This sequence belongs to the class-II aminoacyl-tRNA synthetase family. HisZ subfamily. As to quaternary structure, heteromultimer composed of HisG and HisZ subunits.

Its subcellular location is the cytoplasm. Its pathway is amino-acid biosynthesis; L-histidine biosynthesis; L-histidine from 5-phospho-alpha-D-ribose 1-diphosphate: step 1/9. In terms of biological role, required for the first step of histidine biosynthesis. May allow the feedback regulation of ATP phosphoribosyltransferase activity by histidine. The chain is ATP phosphoribosyltransferase regulatory subunit from Dehalococcoides mccartyi (strain ATCC BAA-2100 / JCM 16839 / KCTC 5957 / BAV1).